We begin with the raw amino-acid sequence, 256 residues long: Triosephosphate isomerase (256 aa).

12-14 (NWK) is a binding site for substrate. The active-site Electrophile is His-99. Glu-169 functions as the Proton acceptor in the catalytic mechanism. Substrate-binding positions include Gly-175, Ser-214, and 235–236 (GG).

It belongs to the triosephosphate isomerase family. In terms of assembly, homodimer.

It is found in the cytoplasm. It carries out the reaction D-glyceraldehyde 3-phosphate = dihydroxyacetone phosphate. Its pathway is carbohydrate biosynthesis; gluconeogenesis. The protein operates within carbohydrate degradation; glycolysis; D-glyceraldehyde 3-phosphate from glycerone phosphate: step 1/1. Its function is as follows. Involved in the gluconeogenesis. Catalyzes stereospecifically the conversion of dihydroxyacetone phosphate (DHAP) to D-glyceraldehyde-3-phosphate (G3P). The protein is Triosephosphate isomerase of Mesorhizobium japonicum (strain LMG 29417 / CECT 9101 / MAFF 303099) (Mesorhizobium loti (strain MAFF 303099)).